The following is a 225-amino-acid chain: Uridylate kinase (225 aa).

9–10 lines the ATP pocket; the sequence is GS. Gly-44 contacts UMP. The ATP site is built by Gly-45 and Arg-49. Residues Asp-66 and 114–120 each bind UMP; that span reads THPGHTT. ATP contacts are provided by Thr-140, Asn-141, Tyr-146, and Asp-149.

It belongs to the UMP kinase family. In terms of assembly, homohexamer.

The protein resides in the cytoplasm. The enzyme catalyses UMP + ATP = UDP + ADP. It participates in pyrimidine metabolism; CTP biosynthesis via de novo pathway; UDP from UMP (UMPK route): step 1/1. Its activity is regulated as follows. Inhibited by UTP. Functionally, catalyzes the reversible phosphorylation of UMP to UDP. This chain is Uridylate kinase, found in Thermococcus gammatolerans (strain DSM 15229 / JCM 11827 / EJ3).